An 878-amino-acid chain; its full sequence is Leucine--tRNA ligase (878 aa).

The short motif at 56–66 (PYPSGKLHMGH) is the 'HIGH' region element. Positions 630-634 (KMSKS) match the 'KMSKS' region motif. Lys633 provides a ligand contact to ATP.

This sequence belongs to the class-I aminoacyl-tRNA synthetase family.

It localises to the cytoplasm. The enzyme catalyses tRNA(Leu) + L-leucine + ATP = L-leucyl-tRNA(Leu) + AMP + diphosphate. This is Leucine--tRNA ligase from Prochlorococcus marinus (strain MIT 9313).